The following is a 356-amino-acid chain: 3-dehydroquinate synthase (356 aa).

Residues 106–110 (GVVGD), 130–131 (TT), K143, and K152 each bind NAD(+). Residues E185, H248, and H265 each coordinate Zn(2+).

The protein belongs to the sugar phosphate cyclases superfamily. Dehydroquinate synthase family. Requires Co(2+) as cofactor. It depends on Zn(2+) as a cofactor. NAD(+) is required as a cofactor.

The protein resides in the cytoplasm. It carries out the reaction 7-phospho-2-dehydro-3-deoxy-D-arabino-heptonate = 3-dehydroquinate + phosphate. Its pathway is metabolic intermediate biosynthesis; chorismate biosynthesis; chorismate from D-erythrose 4-phosphate and phosphoenolpyruvate: step 2/7. Catalyzes the conversion of 3-deoxy-D-arabino-heptulosonate 7-phosphate (DAHP) to dehydroquinate (DHQ). In Thermoanaerobacter pseudethanolicus (strain ATCC 33223 / 39E) (Clostridium thermohydrosulfuricum), this protein is 3-dehydroquinate synthase.